Here is a 294-residue protein sequence, read N- to C-terminus: Transmembrane protein 178B (294 aa).

Residues 1–23 (MAAGRLLLYTGLSLALCALGMLA) form the signal peptide. Asn148 and Asn152 each carry an N-linked (GlcNAc...) asparagine glycan. Helical transmembrane passes span 172–192 (AGFM…GVLG), 206–226 (LLFL…VAGI), and 252–272 (MFCA…CTLA).

The protein belongs to the TMEM178 family.

The protein resides in the membrane. This is Transmembrane protein 178B (TMEM178B) from Homo sapiens (Human).